Here is a 483-residue protein sequence, read N- to C-terminus: MLTLDTLNVMLAVSEEGLIEEMIIALLASPQLAVFFEKFPRLKAAITDDVPRWREALRSRLKDARVPPELTEEVMCYQQSQLLSTPQFIVQLPQILDLLHRLNSPWAEQARQLVDANSTITSALHTLFLQRWRLSLIVQATTLNQQLLEEEREQLLSEVQERMTQSGQLEPILADNNTAAGRLWDMSAGQLKRGDYQLIVKYGEFLNEQPELKRLAEQLGRSREAKSIPRNDAQMETFRTLVREPATVPEQVDGLQQSDDILRLLPPELATLGITELEYEFYRRLVEKQLLTYRLHGESWREKVIERPVVHKDYDEQPRGPFIVCVDTSGSMGGFNEQCAKAFCLALMRIALAENRRCYIMLFSTEIVRYELSGPQGIEQAIRFLSQRFRGGTDLASCFRAIMERLQSREWFDADAVVISDFIAQRLPDDVTSKVKELQRVHQHRFHAVAMSAHGKPGIMRIFDHIWRFDTGMRSRLLRRWRR.

It belongs to the ViaA family. In terms of assembly, homodimer. Interacts with RavA.

It localises to the cytoplasm. In terms of biological role, component of the RavA-ViaA chaperone complex, which may act on the membrane to optimize the function of some of the respiratory chains. ViaA stimulates the ATPase activity of RavA. In Escherichia coli (strain SMS-3-5 / SECEC), this protein is Regulatory protein ViaA.